A 311-amino-acid chain; its full sequence is Glutaminase (311 aa).

Residues Ser66, Asn116, Glu162, Asn169, Tyr193, Tyr245, and Val263 each coordinate substrate.

It belongs to the glutaminase family. In terms of assembly, homotetramer.

It catalyses the reaction L-glutamine + H2O = L-glutamate + NH4(+). The polypeptide is Glutaminase (Rhodopseudomonas palustris (strain HaA2)).